We begin with the raw amino-acid sequence, 75 residues long: U6-lycotoxin-Ls1d (75 aa).

An N-terminal signal peptide occupies residues 1–21 (MKLLLFTALVLVVISLVEVEA). Residues 22–25 (ENER) constitute a propeptide that is removed on maturation.

The protein belongs to the neurotoxin 19 (CSTX) family. 06 (U6-Lctx) subfamily. Post-translationally, contains 4 disulfide bonds. As to expression, expressed by the venom gland.

It localises to the secreted. This Lycosa singoriensis (Wolf spider) protein is U6-lycotoxin-Ls1d.